Reading from the N-terminus, the 150-residue chain is Large ribosomal subunit protein bL9 (150 aa).

The protein belongs to the bacterial ribosomal protein bL9 family.

Its function is as follows. Binds to the 23S rRNA. This chain is Large ribosomal subunit protein bL9, found in Wigglesworthia glossinidia brevipalpis.